Reading from the N-terminus, the 23-residue chain is Coenzyme PQQ synthesis protein A (23 aa).

The segment at residues 15-19 is a cross-link (pyrroloquinoline quinone (Glu-Tyr)); the sequence is EVTLY.

This sequence belongs to the PqqA family.

Its pathway is cofactor biosynthesis; pyrroloquinoline quinone biosynthesis. Functionally, required for coenzyme pyrroloquinoline quinone (PQQ) biosynthesis. PQQ is probably formed by cross-linking a specific glutamate to a specific tyrosine residue and excising these residues from the peptide. This is Coenzyme PQQ synthesis protein A from Colwellia psychrerythraea (strain 34H / ATCC BAA-681) (Vibrio psychroerythus).